Reading from the N-terminus, the 356-residue chain is Histidinol-phosphate aminotransferase (356 aa).

Lysine 214 carries the N6-(pyridoxal phosphate)lysine modification.

The protein belongs to the class-II pyridoxal-phosphate-dependent aminotransferase family. Histidinol-phosphate aminotransferase subfamily. Homodimer. Pyridoxal 5'-phosphate serves as cofactor.

It carries out the reaction L-histidinol phosphate + 2-oxoglutarate = 3-(imidazol-4-yl)-2-oxopropyl phosphate + L-glutamate. It functions in the pathway amino-acid biosynthesis; L-histidine biosynthesis; L-histidine from 5-phospho-alpha-D-ribose 1-diphosphate: step 7/9. This is Histidinol-phosphate aminotransferase from Escherichia coli O127:H6 (strain E2348/69 / EPEC).